Reading from the N-terminus, the 159-residue chain is Ribosomal RNA large subunit methyltransferase H (159 aa).

Positions 76 and 108 each coordinate S-adenosyl-L-methionine.

Belongs to the RNA methyltransferase RlmH family. In terms of assembly, homodimer.

Its subcellular location is the cytoplasm. The catalysed reaction is pseudouridine(1915) in 23S rRNA + S-adenosyl-L-methionine = N(3)-methylpseudouridine(1915) in 23S rRNA + S-adenosyl-L-homocysteine + H(+). Specifically methylates the pseudouridine at position 1915 (m3Psi1915) in 23S rRNA. The chain is Ribosomal RNA large subunit methyltransferase H from Natranaerobius thermophilus (strain ATCC BAA-1301 / DSM 18059 / JW/NM-WN-LF).